A 257-amino-acid polypeptide reads, in one-letter code: Probable transcriptional regulatory protein SRU_2667 (257 aa).

Positions 1-15 (MAGHTRKWAKVKRKK) are enriched in basic residues. Residues 1–25 (MAGHTRKWAKVKRKKQKDDRRKSKV) are disordered.

This sequence belongs to the TACO1 family.

Its subcellular location is the cytoplasm. In Salinibacter ruber (strain DSM 13855 / M31), this protein is Probable transcriptional regulatory protein SRU_2667.